The following is a 406-amino-acid chain: Elongation factor Tu (406 aa).

Residues 10–215 (KPHVNVGTIG…AIDEYIPTPV (206 aa)) form the tr-type G domain. The tract at residues 19-26 (GHVDHGKT) is G1. 19-26 (GHVDHGKT) contributes to the GTP binding site. Residue Thr-26 coordinates Mg(2+). The tract at residues 61–65 (GITIN) is G2. A G3 region spans residues 82-85 (DCPG). Residues 82-86 (DCPGH) and 137-140 (NKVD) each bind GTP. Positions 137 to 140 (NKVD) are G4. Positions 175–177 (SAL) are G5.

Belongs to the TRAFAC class translation factor GTPase superfamily. Classic translation factor GTPase family. EF-Tu/EF-1A subfamily. In terms of assembly, monomer.

The protein localises to the cytoplasm. It carries out the reaction GTP + H2O = GDP + phosphate + H(+). Its function is as follows. GTP hydrolase that promotes the GTP-dependent binding of aminoacyl-tRNA to the A-site of ribosomes during protein biosynthesis. In Thermus thermophilus (strain ATCC BAA-163 / DSM 7039 / HB27), this protein is Elongation factor Tu.